The following is an 89-amino-acid chain: Teretoxin Tan22.12 (89 aa).

The signal sequence occupies residues 1 to 22 (MKVLFTLAMIVVTLCLGQRMRR).

This sequence belongs to the teretoxin C (TC) superfamily. Contains 4 disulfide bonds. Expressed by the venom duct.

Its subcellular location is the secreted. This chain is Teretoxin Tan22.12, found in Terebra anilis (Auger snail).